A 719-amino-acid polypeptide reads, in one-letter code: Alpha-galactosidase 2 (719 aa).

Catalysis depends on aspartate 472, which acts as the Nucleophile. Catalysis depends on aspartate 542, which acts as the Proton donor.

It belongs to the glycosyl hydrolase 36 family.

The enzyme catalyses Hydrolysis of terminal, non-reducing alpha-D-galactose residues in alpha-D-galactosides, including galactose oligosaccharides, galactomannans and galactolipids.. In terms of biological role, alpha-galactosidase associated with the sucrase operon. The sequence is that of Alpha-galactosidase 2 (agaS) from Pediococcus pentosaceus.